We begin with the raw amino-acid sequence, 316 residues long: Type II restriction enzyme BsuBI (316 aa).

Belongs to the BsuBI/PstI type II restriction endonuclease family. As to quaternary structure, homodimer. Mg(2+) is required as a cofactor.

The enzyme catalyses Endonucleolytic cleavage of DNA to give specific double-stranded fragments with terminal 5'-phosphates.. A P subtype restriction enzyme that recognizes the double-stranded sequence 5'-CTGCAG-3' and cleaves after A-5. This chain is Type II restriction enzyme BsuBI (hsdBR), found in Bacillus subtilis.